A 140-amino-acid chain; its full sequence is Ribosome maturation factor RimP (140 aa).

This sequence belongs to the RimP family.

Its subcellular location is the cytoplasm. Required for maturation of 30S ribosomal subunits. This Campylobacter jejuni subsp. jejuni serotype O:6 (strain 81116 / NCTC 11828) protein is Ribosome maturation factor RimP.